A 903-amino-acid chain; its full sequence is DNA-directed DNA polymerase (903 aa).

Residues 103-340 (YDHTKIRVAN…VLQIDAKRQF (238 aa)) form a 3'-5'exonuclease region. Positions 114, 116, and 222 each coordinate Mg(2+). Residues 248–264 (TRVKVIENMYGSREIIT) form a beta hairpin region. Residues Asp-327, Asp-411, and Leu-412 each contribute to the Mg(2+) site. Positions 380–903 (IPQGRSHPVQ…KASLFDMFDF (524 aa)) are polymerase. Substrate contacts are provided by residues 414–416 (SLY), Arg-482, and Lys-560. Asp-623 contacts Mg(2+). Residues 705-708 (KKRY) form a binding of DNA in B-conformation region. The interval 897 to 903 (LFDMFDF) is interaction with the polymerase clamp.

Belongs to the DNA polymerase type-B family. Part of the replicase complex that includes the DNA polymerase, the polymerase clamp, the clamp loader complex, the single-stranded DNA binding protein, and the primase/helicase. Interacts with the polymerase clamp; this interaction constitutes the polymerase holoenzyme. Mg(2+) serves as cofactor.

The catalysed reaction is DNA(n) + a 2'-deoxyribonucleoside 5'-triphosphate = DNA(n+1) + diphosphate. In terms of biological role, replicates the viral genomic DNA. This polymerase possesses two enzymatic activities: DNA synthesis (polymerase) and an exonucleolytic activity that degrades single-stranded DNA in the 3'- to 5'-direction for proofreading purpose. This chain is DNA-directed DNA polymerase (43), found in Escherichia coli (Bacteriophage RB69).